Here is a 196-residue protein sequence, read N- to C-terminus: UPF0319 protein VV1_0237 (196 aa).

Residues 1–19 (MKKMMILSALALFSSSLFA) form the signal peptide.

It belongs to the UPF0319 family.

The sequence is that of UPF0319 protein VV1_0237 from Vibrio vulnificus (strain CMCP6).